The primary structure comprises 299 residues: DNA-binding transcriptional repressor CapW (299 aa).

Over residues 1–15 (MPDNFREGDKQDSQK) the composition is skewed to basic and acidic residues. Positions 1–21 (MPDNFREGDKQDSQKGRQGAR) are disordered. The winged HTH domain stretch occupies residues 1–95 (MPDNFREGDK…LFQPVYMTSS (95 aa)). A WYL domain region spans residues 96–207 (LECYLNDLLQ…LSRIVQAQNA (112 aa)). One can recognise a WYL domain in the interval 131-211 (LRRLDTDVVS…VQAQNAGPDE (81 aa)). Positions 156-200 (YQSMSDPQGSKRTLTPHSLVHDGYRWHTRAWCHKRGEYRDFLLSR) are probable ligand-binding region. A WCX domain region spans residues 208 to 299 (GPDEERANGD…KDEIYALLKQ (92 aa)).

In terms of assembly, homodimer.

Its function is as follows. Transcriptional regulator of a CBASS antivirus system. CBASS (cyclic oligonucleotide-based antiphage signaling system) provides immunity against bacteriophage. The CD-NTase protein synthesizes cyclic nucleotides in response to infection; these serve as specific second messenger signals. The signals activate a diverse range of effectors, leading to bacterial cell death and thus abortive phage infection. A type III CBASS system. Expression of this CBASS system (Cap18-Cap6-Cap7-CdnC-CapW-Cap17) in a susceptible E.coli (strain MG1655) confers resistance to bacteriophage P1. Binds specifically to and represses expression from the CBASS promoter, found between the genes for divergently transcribed capW and cdnC. The polypeptide is DNA-binding transcriptional repressor CapW (Escherichia coli (strain KTE188)).